Here is a 340-residue protein sequence, read N- to C-terminus: UDP-3-O-acylglucosamine N-acyltransferase (340 aa).

The active-site Proton acceptor is the histidine 247.

Belongs to the transferase hexapeptide repeat family. LpxD subfamily. As to quaternary structure, homotrimer.

The catalysed reaction is a UDP-3-O-[(3R)-3-hydroxyacyl]-alpha-D-glucosamine + a (3R)-hydroxyacyl-[ACP] = a UDP-2-N,3-O-bis[(3R)-3-hydroxyacyl]-alpha-D-glucosamine + holo-[ACP] + H(+). It participates in bacterial outer membrane biogenesis; LPS lipid A biosynthesis. In terms of biological role, catalyzes the N-acylation of UDP-3-O-acylglucosamine using 3-hydroxyacyl-ACP as the acyl donor. Is involved in the biosynthesis of lipid A, a phosphorylated glycolipid that anchors the lipopolysaccharide to the outer membrane of the cell. This is UDP-3-O-acylglucosamine N-acyltransferase from Caulobacter sp. (strain K31).